We begin with the raw amino-acid sequence, 354 residues long: Photosystem II protein D1 3 (354 aa).

Transmembrane regions (helical) follow at residues 29 to 46, 118 to 133, and 142 to 156; these read YIGW…TATT, HFLI…EWEL, and WIAV…AATA. Histidine 118 contributes to the chlorophyll a binding site. Tyrosine 126 is a pheophytin a binding site. Positions 170 and 189 each coordinate [CaMn4O5] cluster. Residues 197–218 traverse the membrane as a helical segment; the sequence is FHQLGVAGVFGGALFSAMHGSL. Chlorophyll a is bound at residue histidine 198. Residues histidine 215 and 264–265 each bind a quinone; that span reads SF. Fe cation is bound at residue histidine 215. Histidine 272 contributes to the Fe cation binding site. Residues 274-288 form a helical membrane-spanning segment; the sequence is FLAAWPVIGIWFTAL. Positions 332, 333, 342, and 344 each coordinate [CaMn4O5] cluster. A propeptide spanning residues 345–354 is cleaved from the precursor; it reads AVEVAPAVRG.

It belongs to the reaction center PufL/M/PsbA/D family. In terms of assembly, PSII is composed of 1 copy each of membrane proteins PsbA, PsbB, PsbC, PsbD, PsbE, PsbF, PsbH, PsbI, PsbJ, PsbK, PsbL, PsbM, PsbT, PsbX, PsbY, PsbZ, Psb30/Ycf12, peripheral proteins PsbO, CyanoQ (PsbQ), PsbU, PsbV and a large number of cofactors. It forms dimeric complexes. The cofactor is The D1/D2 heterodimer binds P680, chlorophylls that are the primary electron donor of PSII, and subsequent electron acceptors. It shares a non-heme iron and each subunit binds pheophytin, quinone, additional chlorophylls, carotenoids and lipids. D1 provides most of the ligands for the Mn4-Ca-O5 cluster of the oxygen-evolving complex (OEC). There is also a Cl(-1) ion associated with D1 and D2, which is required for oxygen evolution. The PSII complex binds additional chlorophylls, carotenoids and specific lipids.. Post-translationally, tyr-161 forms a radical intermediate that is referred to as redox-active TyrZ, YZ or Y-Z. C-terminally processed by CtpA; processing is essential to allow assembly of the oxygen-evolving complex and thus photosynthetic growth.

It localises to the cellular thylakoid membrane. The catalysed reaction is 2 a plastoquinone + 4 hnu + 2 H2O = 2 a plastoquinol + O2. Its function is as follows. Photosystem II (PSII) is a light-driven water:plastoquinone oxidoreductase that uses light energy to abstract electrons from H(2)O, generating O(2) and a proton gradient subsequently used for ATP formation. It consists of a core antenna complex that captures photons, and an electron transfer chain that converts photonic excitation into a charge separation. The D1/D2 (PsbA/PsbD) reaction center heterodimer binds P680, the primary electron donor of PSII as well as several subsequent electron acceptors. In Synechococcus sp. (strain JA-3-3Ab) (Cyanobacteria bacterium Yellowstone A-Prime), this protein is Photosystem II protein D1 3.